The sequence spans 412 residues: CinA-like protein (412 aa).

It belongs to the CinA family.

The protein is CinA-like protein of Salinibacter ruber (strain DSM 13855 / M31).